The following is a 470-amino-acid chain: Aspartyl aminopeptidase (470 aa).

Histidine 92 contributes to the Zn(2+) binding site. Histidine 166 provides a ligand contact to substrate. Residue aspartate 263 coordinates Zn(2+). Glutamate 299 contributes to the substrate binding site. Residues glutamate 300 and aspartate 343 each contribute to the Zn(2+) site. Positions 343, 346, 371, and 378 each coordinate substrate. Residue histidine 437 coordinates Zn(2+).

This sequence belongs to the peptidase M18 family. Tetrahedron-shaped homododecamer built from six homodimers. Zn(2+) is required as a cofactor. In terms of tissue distribution, expressed in various cell types and tissues including the pharynx, neurons, body wall muscle, intestine and vulva.

Its subcellular location is the cytoplasm. It localises to the cytosol. The enzyme catalyses Release of an N-terminal aspartate or glutamate from a peptide, with a preference for aspartate.. Functionally, aminopeptidase with specificity towards an acidic amino acid at the N-terminus. Plays a role in membrane trafficking and is specifically involved in the recycling and degradation of endocytic cargo. The protein is Aspartyl aminopeptidase of Caenorhabditis elegans.